A 311-amino-acid chain; its full sequence is Putative pyruvate, phosphate dikinase regulatory protein (311 aa).

180–187 contributes to the ADP binding site; it reads GVSRSSKT.

This sequence belongs to the pyruvate, phosphate/water dikinase regulatory protein family. PDRP subfamily.

It carries out the reaction N(tele)-phospho-L-histidyl/L-threonyl-[pyruvate, phosphate dikinase] + ADP = N(tele)-phospho-L-histidyl/O-phospho-L-threonyl-[pyruvate, phosphate dikinase] + AMP + H(+). The enzyme catalyses N(tele)-phospho-L-histidyl/O-phospho-L-threonyl-[pyruvate, phosphate dikinase] + phosphate + H(+) = N(tele)-phospho-L-histidyl/L-threonyl-[pyruvate, phosphate dikinase] + diphosphate. In terms of biological role, bifunctional serine/threonine kinase and phosphorylase involved in the regulation of the pyruvate, phosphate dikinase (PPDK) by catalyzing its phosphorylation/dephosphorylation. This Paramagnetospirillum magneticum (strain ATCC 700264 / AMB-1) (Magnetospirillum magneticum) protein is Putative pyruvate, phosphate dikinase regulatory protein.